The sequence spans 224 residues: UPF0173 metal-dependent hydrolase Ta0764 (224 aa).

It belongs to the UPF0173 family.

The polypeptide is UPF0173 metal-dependent hydrolase Ta0764 (Thermoplasma acidophilum (strain ATCC 25905 / DSM 1728 / JCM 9062 / NBRC 15155 / AMRC-C165)).